The following is a 510-amino-acid chain: ETS translocation variant 5 (510 aa).

A disordered region spans residues 131–208 (FKPLTPPTTP…QPLQMPKMMP (78 aa)). Positions 161–174 (GHAPAAGPVQGVGP) are enriched in low complexity. Residues 175-185 (APAPHSLPEPG) show a composition bias toward pro residues. Position 248 is a phosphoserine (Ser-248). Lys-350 participates in a covalent cross-link: Glycyl lysine isopeptide (Lys-Gly) (interchain with G-Cter in SUMO2). Positions 368 to 448 (LQLWQFLVTL…AGERYVYKFV (81 aa)) form a DNA-binding region, ETS.

As to quaternary structure, interacts (via C-terminal) with ZMYM5 (via N-terminal 120 amino acid region). In terms of tissue distribution, ubiquitous.

It is found in the nucleus. Functionally, binds to DNA sequences containing the consensus nucleotide core sequence 5'-GGAA.-3'. The protein is ETS translocation variant 5 (ETV5) of Homo sapiens (Human).